A 124-amino-acid polypeptide reads, in one-letter code: Large ribosomal subunit protein bL20 (124 aa).

This sequence belongs to the bacterial ribosomal protein bL20 family.

Binds directly to 23S ribosomal RNA and is necessary for the in vitro assembly process of the 50S ribosomal subunit. It is not involved in the protein synthesizing functions of that subunit. This is Large ribosomal subunit protein bL20 (rplT) from Mycoplasma genitalium (strain ATCC 33530 / DSM 19775 / NCTC 10195 / G37) (Mycoplasmoides genitalium).